We begin with the raw amino-acid sequence, 446 residues long: Histidine--tRNA ligase (446 aa).

This sequence belongs to the class-II aminoacyl-tRNA synthetase family. Homodimer.

It localises to the cytoplasm. It carries out the reaction tRNA(His) + L-histidine + ATP = L-histidyl-tRNA(His) + AMP + diphosphate + H(+). The sequence is that of Histidine--tRNA ligase from Burkholderia ambifaria (strain MC40-6).